Here is a 452-residue protein sequence, read N- to C-terminus: Tripartite motif-containing protein 51 (452 aa).

The RING-type zinc finger occupies 15-56; the sequence is CPICMNYFLDPVTIDCGHSFCRPCLYLNWQDTAVLAQCSECK. Residues 88–129 form a B box-type zinc finger; that stretch reads SEEQICGMHRETKKMFCEVDKSLLCLPCSNSQEHRNHIHCPI. Cys93, His96, Cys115, and His121 together coordinate Zn(2+). The B30.2/SPRY domain occupies 269–452; sequence ELSAGPITGL…LRPIFCCSHF (184 aa).

Belongs to the TRIM/RBCC family.

The protein is Tripartite motif-containing protein 51 (TRIM51) of Homo sapiens (Human).